Reading from the N-terminus, the 141-residue chain is Small ribosomal subunit protein bS6 (141 aa).

The disordered stretch occupies residues 96–141 (VTGPSEMLKAEENRSERRERRERPEHADGAEGDDSNDSDNSDNADE). The segment covering 103–124 (LKAEENRSERRERRERPEHADG) has biased composition (basic and acidic residues). Positions 125–141 (AEGDDSNDSDNSDNADE) are enriched in acidic residues.

This sequence belongs to the bacterial ribosomal protein bS6 family.

Functionally, binds together with bS18 to 16S ribosomal RNA. This Pseudomonas entomophila (strain L48) protein is Small ribosomal subunit protein bS6.